The primary structure comprises 108 residues: Large ribosomal subunit protein uL24 (108 aa).

Belongs to the universal ribosomal protein uL24 family. In terms of assembly, part of the 50S ribosomal subunit.

In terms of biological role, one of two assembly initiator proteins, it binds directly to the 5'-end of the 23S rRNA, where it nucleates assembly of the 50S subunit. Functionally, one of the proteins that surrounds the polypeptide exit tunnel on the outside of the subunit. The polypeptide is Large ribosomal subunit protein uL24 (Mycoplasmopsis synoviae (strain 53) (Mycoplasma synoviae)).